The sequence spans 615 residues: RNA polymerase sigma factor RpoD (615 aa).

The interval 166 to 216 (GYIDPDDGITPPAAEVPPPVDTKTAKADDDSEDEEAEATEDEEEAESGPDP) is disordered. A compositionally biased stretch (acidic residues) spans 194-212 (DDSEDEEAEATEDEEEAES). A sigma-70 factor domain-2 region spans residues 381-451 (MVEANLRLVI…TRSIADQART (71 aa)). The short motif at 405–408 (DLIQ) is the Interaction with polymerase core subunit RpoC element. The interval 460–536 (ETINKLNRIS…DSTMQSPIDV (77 aa)) is sigma-70 factor domain-3. The tract at residues 549-602 (VLSGLTAREAKVLRMRFGIDMNTDHTLEEVGKQFDVTRERIRQIEAKALRKLRH) is sigma-70 factor domain-4. Residues 575 to 594 (LEEVGKQFDVTRERIRQIEA) constitute a DNA-binding region (H-T-H motif).

This sequence belongs to the sigma-70 factor family. RpoD/SigA subfamily. In terms of assembly, interacts transiently with the RNA polymerase catalytic core.

Its subcellular location is the cytoplasm. Functionally, sigma factors are initiation factors that promote the attachment of RNA polymerase to specific initiation sites and are then released. This sigma factor is the primary sigma factor during exponential growth. The protein is RNA polymerase sigma factor RpoD of Pseudomonas protegens (strain DSM 19095 / LMG 27888 / CFBP 6595 / CHA0).